A 169-amino-acid polypeptide reads, in one-letter code: S-ribosylhomocysteine lyase (169 aa).

Positions 54, 58, and 128 each coordinate Fe cation.

It belongs to the LuxS family. As to quaternary structure, homodimer. It depends on Fe cation as a cofactor.

The catalysed reaction is S-(5-deoxy-D-ribos-5-yl)-L-homocysteine = (S)-4,5-dihydroxypentane-2,3-dione + L-homocysteine. Its function is as follows. Involved in the synthesis of autoinducer 2 (AI-2) which is secreted by bacteria and is used to communicate both the cell density and the metabolic potential of the environment. The regulation of gene expression in response to changes in cell density is called quorum sensing. Catalyzes the transformation of S-ribosylhomocysteine (RHC) to homocysteine (HC) and 4,5-dihydroxy-2,3-pentadione (DPD). The chain is S-ribosylhomocysteine lyase from Tolumonas auensis (strain DSM 9187 / NBRC 110442 / TA 4).